The primary structure comprises 161 residues: Small ribosomal subunit protein uS9 (161 aa).

The disordered stretch occupies residues 1–38 (MAQTITSLADLKQGPGAEPAGLSAEPQEPKLDKEGRAY). Basic and acidic residues predominate over residues 27–38 (QEPKLDKEGRAY).

The protein belongs to the universal ribosomal protein uS9 family.

This chain is Small ribosomal subunit protein uS9, found in Rhodospirillum centenum (strain ATCC 51521 / SW).